We begin with the raw amino-acid sequence, 269 residues long: Tryptophan synthase alpha chain (269 aa).

Active-site proton acceptor residues include glutamate 49 and aspartate 60.

Belongs to the TrpA family. Tetramer of two alpha and two beta chains.

The enzyme catalyses (1S,2R)-1-C-(indol-3-yl)glycerol 3-phosphate + L-serine = D-glyceraldehyde 3-phosphate + L-tryptophan + H2O. It functions in the pathway amino-acid biosynthesis; L-tryptophan biosynthesis; L-tryptophan from chorismate: step 5/5. In terms of biological role, the alpha subunit is responsible for the aldol cleavage of indoleglycerol phosphate to indole and glyceraldehyde 3-phosphate. This Actinobacillus succinogenes (strain ATCC 55618 / DSM 22257 / CCUG 43843 / 130Z) protein is Tryptophan synthase alpha chain.